A 476-amino-acid chain; its full sequence is UDP-glycosyltransferase 71C3 (476 aa).

UDP-alpha-D-glucose-binding positions include serine 290, 349 to 351 (APQ), 366 to 374 (HCGWNSVLE), and 388 to 391 (YAEQ).

It belongs to the UDP-glycosyltransferase family.

Functionally, possesses low quercetin 3-O-glucosyltransferase activity in vitro. In Arabidopsis thaliana (Mouse-ear cress), this protein is UDP-glycosyltransferase 71C3 (UGT71C3).